The primary structure comprises 467 residues: Cysteine--tRNA ligase (467 aa).

Cys29 is a Zn(2+) binding site. The short motif at Pro31–Asn41 is the 'HIGH' region element. Residues Cys209, His234, and Glu238 each coordinate Zn(2+). The short motif at Lys266–Ser270 is the 'KMSKS' region element. ATP is bound at residue Lys269. At Ser270 the chain carries Phosphoserine.

Belongs to the class-I aminoacyl-tRNA synthetase family. Monomer. Requires Zn(2+) as cofactor.

It localises to the cytoplasm. The catalysed reaction is tRNA(Cys) + L-cysteine + ATP = L-cysteinyl-tRNA(Cys) + AMP + diphosphate. This Bacillus licheniformis (strain ATCC 14580 / DSM 13 / JCM 2505 / CCUG 7422 / NBRC 12200 / NCIMB 9375 / NCTC 10341 / NRRL NRS-1264 / Gibson 46) protein is Cysteine--tRNA ligase.